Consider the following 219-residue polypeptide: Ribosome maturation factor RimP (219 aa).

Residues glutamate 195–lysine 219 are disordered.

The protein belongs to the RimP family.

Its subcellular location is the cytoplasm. In terms of biological role, required for maturation of 30S ribosomal subunits. The sequence is that of Ribosome maturation factor RimP from Brucella melitensis biotype 2 (strain ATCC 23457).